The primary structure comprises 208 residues: MCRGIIGRKIGMTGVFSDQGEYVPVTVIEAGPCVVTQIKTVETDGYSALQLGFLEKKASKINKPLAGHFKKSGGVGFAYVREMAVDDPSAYTLGQVINAELFSAGEKVHVAGLMKGRGFAGVVKRHGFAGGKDTHGCHSHRVPGSIGTSAWPSKVFKGRKLPGRYGNTRITTKNLKIFDIQPETNLILIKGAVPGSNNGLVEIRKINA.

This sequence belongs to the universal ribosomal protein uL3 family. In terms of assembly, part of the 50S ribosomal subunit. Forms a cluster with proteins L14 and L19.

Its function is as follows. One of the primary rRNA binding proteins, it binds directly near the 3'-end of the 23S rRNA, where it nucleates assembly of the 50S subunit. The sequence is that of Large ribosomal subunit protein uL3 from Desulfosudis oleivorans (strain DSM 6200 / JCM 39069 / Hxd3) (Desulfococcus oleovorans).